The following is an 83-amino-acid chain: Cytochrome b559 subunit alpha (83 aa).

A helical transmembrane segment spans residues 21 to 35 (IIHSITIPSLFIAGW). H23 is a heme binding site.

The protein belongs to the PsbE/PsbF family. As to quaternary structure, heterodimer of an alpha subunit and a beta subunit. PSII is composed of 1 copy each of membrane proteins PsbA, PsbB, PsbC, PsbD, PsbE, PsbF, PsbH, PsbI, PsbJ, PsbK, PsbL, PsbM, PsbT, PsbX, PsbY, PsbZ, Psb30/Ycf12, at least 3 peripheral proteins of the oxygen-evolving complex and a large number of cofactors. It forms dimeric complexes. The cofactor is heme b.

The protein resides in the plastid. It is found in the chloroplast thylakoid membrane. This b-type cytochrome is tightly associated with the reaction center of photosystem II (PSII). PSII is a light-driven water:plastoquinone oxidoreductase that uses light energy to abstract electrons from H(2)O, generating O(2) and a proton gradient subsequently used for ATP formation. It consists of a core antenna complex that captures photons, and an electron transfer chain that converts photonic excitation into a charge separation. The chain is Cytochrome b559 subunit alpha from Lotus japonicus (Lotus corniculatus var. japonicus).